The chain runs to 372 residues: DNA-directed RNA polymerase subunit alpha (372 aa).

The alpha N-terminal domain (alpha-NTD) stretch occupies residues 1–268 (MIFDEDSNSI…DQFQPFINFD (268 aa)). Positions 280-372 (KDTLPYDSNL…ESLSKQYSEE (93 aa)) are alpha C-terminal domain (alpha-CTD).

This sequence belongs to the RNA polymerase alpha chain family. In terms of assembly, homodimer. The RNAP catalytic core consists of 2 alpha, 1 beta, 1 beta' and 1 omega subunit. When a sigma factor is associated with the core the holoenzyme is formed, which can initiate transcription.

The enzyme catalyses RNA(n) + a ribonucleoside 5'-triphosphate = RNA(n+1) + diphosphate. Its function is as follows. DNA-dependent RNA polymerase catalyzes the transcription of DNA into RNA using the four ribonucleoside triphosphates as substrates. The sequence is that of DNA-directed RNA polymerase subunit alpha from Ehrlichia chaffeensis (strain ATCC CRL-10679 / Arkansas).